The following is a 203-amino-acid chain: uncharacterized protein (203 aa).

Positions 90–188 constitute a PilZ domain; that stretch reads EKRQHVRVQP…YENIIGRYVM (99 aa).

The protein to A.aeolicus aq_820 and aq_1583.

This is an uncharacterized protein from Aquifex aeolicus (strain VF5).